The chain runs to 90 residues: Exodeoxyribonuclease 7 small subunit (90 aa).

The tract at residues 62 to 90 is disordered; that stretch reads QDGQANPMSSQGHTAGEYPDDEAEEAEEA. The span at 64–74 shows a compositional bias: polar residues; sequence GQANPMSSQGH. Acidic residues predominate over residues 79–90; it reads YPDDEAEEAEEA.

Belongs to the XseB family. As to quaternary structure, heterooligomer composed of large and small subunits.

The protein localises to the cytoplasm. It catalyses the reaction Exonucleolytic cleavage in either 5'- to 3'- or 3'- to 5'-direction to yield nucleoside 5'-phosphates.. Its function is as follows. Bidirectionally degrades single-stranded DNA into large acid-insoluble oligonucleotides, which are then degraded further into small acid-soluble oligonucleotides. In Desulfovibrio desulfuricans (strain ATCC 27774 / DSM 6949 / MB), this protein is Exodeoxyribonuclease 7 small subunit.